Consider the following 569-residue polypeptide: Endonuclease/exonuclease/phosphatase family domain-containing protein 1 (569 aa).

Residues 1 to 20 (MGSTLGCHRSIPRDPSDLSH) form a disordered region. The N-myristoyl glycine moiety is linked to residue glycine 2. Residues 11 to 20 (IPRDPSDLSH) are compositionally biased toward basic and acidic residues. Phosphoserine occurs at positions 16, 21, and 25. One can recognise a HhH domain in the interval 38–67 (ERLNINTATEEELMTLPGVTRAVARSIVEY). Serine 106, serine 110, serine 160, and serine 173 each carry phosphoserine. Residues 200-224 (SRPPSTHTNGGLTFTAKPHPSPTSL) are disordered. Residues 202 to 211 (PPSTHTNGGL) show a composition bias toward polar residues. Threonine 265 carries the phosphothreonine modification. The tract at residues 548–569 (EVPRNGNGVTLEPSEANVKHER) is disordered.

The polypeptide is Endonuclease/exonuclease/phosphatase family domain-containing protein 1 (Eepd1) (Rattus norvegicus (Rat)).